Here is a 73-residue protein sequence, read N- to C-terminus: MWFCIDLGADAFKEAGVLAGKKNRRVLQYILGLNIFKRELIPPCKDPDPYQIQILLKNYILKNVSTVFTYYCQ.

The protein belongs to the asfivirus DP63R family.

This is an uncharacterized protein from Ornithodoros (relapsing fever ticks).